The sequence spans 266 residues: Methionine aminopeptidase 1 (266 aa).

Residue His-88 participates in substrate binding. Asp-106, Asp-117, and His-186 together coordinate a divalent metal cation. His-193 provides a ligand contact to substrate. A divalent metal cation-binding residues include Glu-219 and Glu-250.

The protein belongs to the peptidase M24A family. Methionine aminopeptidase type 1 subfamily. As to quaternary structure, monomer. Requires Co(2+) as cofactor. Zn(2+) is required as a cofactor. It depends on Mn(2+) as a cofactor. The cofactor is Fe(2+).

It catalyses the reaction Release of N-terminal amino acids, preferentially methionine, from peptides and arylamides.. In terms of biological role, removes the N-terminal methionine from nascent proteins. The N-terminal methionine is often cleaved when the second residue in the primary sequence is small and uncharged (Met-Ala-, Cys, Gly, Pro, Ser, Thr, or Val). Requires deformylation of the N(alpha)-formylated initiator methionine before it can be hydrolyzed. This Mycobacterium tuberculosis (strain CDC 1551 / Oshkosh) protein is Methionine aminopeptidase 1.